Reading from the N-terminus, the 295-residue chain is Ribosomal RNA small subunit methyltransferase A (295 aa).

S-adenosyl-L-methionine-binding residues include N31, L33, G58, E79, D104, and N129.

The protein belongs to the class I-like SAM-binding methyltransferase superfamily. rRNA adenine N(6)-methyltransferase family. RsmA subfamily.

It is found in the cytoplasm. It carries out the reaction adenosine(1518)/adenosine(1519) in 16S rRNA + 4 S-adenosyl-L-methionine = N(6)-dimethyladenosine(1518)/N(6)-dimethyladenosine(1519) in 16S rRNA + 4 S-adenosyl-L-homocysteine + 4 H(+). Its function is as follows. Specifically dimethylates two adjacent adenosines (A1518 and A1519) in the loop of a conserved hairpin near the 3'-end of 16S rRNA in the 30S particle. May play a critical role in biogenesis of 30S subunits. This Leuconostoc citreum (strain KM20) protein is Ribosomal RNA small subunit methyltransferase A.